The sequence spans 101 residues: UPF0473 protein MGAS10750_Spy1887 (101 aa).

It belongs to the UPF0473 family.

This chain is UPF0473 protein MGAS10750_Spy1887, found in Streptococcus pyogenes serotype M4 (strain MGAS10750).